A 253-amino-acid polypeptide reads, in one-letter code: Tetraspanin-11 (253 aa).

The next 3 membrane-spanning stretches (helical) occupy residues 19 to 39, 63 to 83, and 93 to 113; these read LLFVFNFFFWVGGAAVLAVGI, ILIFAGVLVMVTGFLGFGAIL, and YFCLLLVIFLVELVAGVLAHV. The N-linked (GlcNAc...) asparagine glycan is linked to asparagine 127. The helical transmembrane segment at 220–240 threads the bilayer; the sequence is LLLMGAVGIGVACLQICGMVL.

Belongs to the tetraspanin (TM4SF) family.

The protein localises to the membrane. The sequence is that of Tetraspanin-11 (TSPAN11) from Homo sapiens (Human).